Consider the following 214-residue polypeptide: MLRERFLTGGAEAMPDYELLELILFRALPRQDVKPLARRLLDVFGSFGHVLAAPPARLTEVTGVGEAVVQELKIVEAAAQRLARSRVLQRPVLSSWQALLDYCHTAMAHRPTEQFRVLFLDRKNLLIADEEQARGTVDHVPVYPREVVKRALELDASALILVHNHPSGDPTPSQADIAMTDQIRHAAEALGLVLHDHLVIGKGRELSFRAEGLL.

The MPN domain maps to Val-92–Leu-214. Residues His-163, His-165, and Asp-176 each contribute to the Zn(2+) site. The short motif at His-163–Asp-176 is the JAMM motif element.

The protein belongs to the UPF0758 family.

This chain is UPF0758 protein, found in Rhodobacter capsulatus (Rhodopseudomonas capsulata).